The following is a 158-amino-acid chain: MLNQLDNLTERVRGSNKLVDRWLHVRKHLLVAYYNLVGIKPGKESYMRLNEKALDDFCQSLVDYLSAGHFSIYERILHKLEGNGQLARAAKIWPQLEANTQQIMDDYDSSLETAIDHDNYLEFQQVLSDIGEALEARFVLEDKLILLVLDAARVKYPA.

This sequence belongs to the Rsd/AlgQ family. Interacts with RpoD.

It localises to the cytoplasm. In terms of biological role, binds RpoD and negatively regulates RpoD-mediated transcription activation by preventing the interaction between the primary sigma factor RpoD with the catalytic core of the RNA polymerase and with promoter DNA. May be involved in replacement of the RNA polymerase sigma subunit from RpoD to RpoS during the transition from exponential growth to the stationary phase. The sequence is that of Regulator of sigma D from Escherichia coli (strain UTI89 / UPEC).